Reading from the N-terminus, the 242-residue chain is ATP-dependent dethiobiotin synthetase BioD (242 aa).

Residue 12–17 (EVGKTV) participates in ATP binding. Thr-16 provides a ligand contact to Mg(2+). Lys-37 is a catalytic residue. Ser-41 provides a ligand contact to substrate. Residues Asp-51 and 112 to 115 (EGAG) contribute to the ATP site. Mg(2+)-binding residues include Asp-51 and Glu-112.

Belongs to the dethiobiotin synthetase family. As to quaternary structure, homodimer. Requires Mg(2+) as cofactor.

It localises to the cytoplasm. The catalysed reaction is (7R,8S)-7,8-diammoniononanoate + CO2 + ATP = (4R,5S)-dethiobiotin + ADP + phosphate + 3 H(+). The protein operates within cofactor biosynthesis; biotin biosynthesis; biotin from 7,8-diaminononanoate: step 1/2. In terms of biological role, catalyzes a mechanistically unusual reaction, the ATP-dependent insertion of CO2 between the N7 and N8 nitrogen atoms of 7,8-diaminopelargonic acid (DAPA, also called 7,8-diammoniononanoate) to form a ureido ring. The sequence is that of ATP-dependent dethiobiotin synthetase BioD from Bacillus cereus (strain G9842).